Reading from the N-terminus, the 189-residue chain is MTLAAYKEKMKELPLVSLFCSCFLSDPLNKSSYKYEADTVDLNWCVISDMEVIELNKCTSGQSFEVILKPPSFDGVPEFNASLPRRRDPSLEEIQKKLEAAEERRKYQEAELLKHLAEKREHEREVIQKAIEENNNFIKMAKEKLAQKMESNKENREAHLAAMLERLQEKDKHAEEVRKNKELKEEASR.

2 S-palmitoyl cysteine lipidation sites follow: Cys-20 and Cys-22. The SLD domain maps to 48–189 (SDMEVIELNK…NKELKEEASR (142 aa)). Phosphoserine is present on residues Glu-54 and Ser-90. The stretch at 90–189 (SLEEIQKKLE…NKELKEEASR (100 aa)) forms a coiled coil. Residues 168 to 189 (QEKDKHAEEVRKNKELKEEASR) are disordered.

It belongs to the stathmin family. In terms of tissue distribution, nervous tissue.

It is found in the golgi apparatus. The protein localises to the cell projection. Its subcellular location is the growth cone. It localises to the axon. Its function is as follows. Exhibits microtubule-destabilizing activity. The chain is Stathmin-4 (Stmn4) from Rattus norvegicus (Rat).